We begin with the raw amino-acid sequence, 157 residues long: Cyclic pyranopterin monophosphate synthase (157 aa).

Substrate is bound by residues 74–76 (MCH) and 112–113 (ME). Residue aspartate 127 is part of the active site.

The protein belongs to the MoaC family. In terms of assembly, homohexamer; trimer of dimers.

It carries out the reaction (8S)-3',8-cyclo-7,8-dihydroguanosine 5'-triphosphate = cyclic pyranopterin phosphate + diphosphate. Its pathway is cofactor biosynthesis; molybdopterin biosynthesis. In terms of biological role, catalyzes the conversion of (8S)-3',8-cyclo-7,8-dihydroguanosine 5'-triphosphate to cyclic pyranopterin monophosphate (cPMP). This is Cyclic pyranopterin monophosphate synthase from Sulfurovum sp. (strain NBC37-1).